The chain runs to 326 residues: MDPSTTILRVKRKRGTDPADALLLACKRIRPEATAAQPSDESEPEPQEPKIENSVFKLVATVVSQDAPVQPHVREALARPRLAHHALRPSQGSSQRIIGDLRSVKWSTRREERYRILSSHRAGLPSEPAPAGGGGEENHDSHAESRDGLPLGEVQVFDILHEEEDVKVPGKMVVSDPETILCNSVKMIREKLSVSGAGLGTEHREKEDDYVYDLYYQETATPGWIQDILSVRPYSQEGELVPDEVAWEEEVYEDEDDENAEANWRNDYPEESSEGDSEGEERYGGCWSEEHSYSRRSRECYRRDMIDELENDKDEDDEEREYNDSD.

Disordered stretches follow at residues 30–52, 120–147, 252–297, and 307–326; these read RPEA…PKIE, HRAG…ESRD, YEDE…SRRS, and DELE…NDSD. A compositionally biased stretch (basic and acidic residues) spans 136-147; sequence EENHDSHAESRD. The segment covering 269–279 has biased composition (acidic residues); it reads PEESSEGDSEG. Over residues 280 to 297 the composition is skewed to basic and acidic residues; that stretch reads EERYGGCWSEEHSYSRRS.

This sequence belongs to the IWR1/SLC7A6OS family.

Its subcellular location is the cytoplasm. It is found in the nucleus. Directs RNA polymerase II nuclear import. This chain is Probable RNA polymerase II nuclear localization protein SLC7A6OS (slc7a6os), found in Danio rerio (Zebrafish).